Reading from the N-terminus, the 820-residue chain is DNA gyrase subunit A (820 aa).

A Topo IIA-type catalytic domain is found at 31 to 496 (IPDVRDGLKP…TLTNIEIEDL (466 aa)). Tyrosine 119 serves as the catalytic O-(5'-phospho-DNA)-tyrosine intermediate. The short motif at 523–529 (QRRGGKG) is the GyrA-box element.

Belongs to the type II topoisomerase GyrA/ParC subunit family. Heterotetramer, composed of two GyrA and two GyrB chains. In the heterotetramer, GyrA contains the active site tyrosine that forms a transient covalent intermediate with DNA, while GyrB binds cofactors and catalyzes ATP hydrolysis.

The protein localises to the cytoplasm. It catalyses the reaction ATP-dependent breakage, passage and rejoining of double-stranded DNA.. A type II topoisomerase that negatively supercoils closed circular double-stranded (ds) DNA in an ATP-dependent manner to modulate DNA topology and maintain chromosomes in an underwound state. Negative supercoiling favors strand separation, and DNA replication, transcription, recombination and repair, all of which involve strand separation. Also able to catalyze the interconversion of other topological isomers of dsDNA rings, including catenanes and knotted rings. Type II topoisomerases break and join 2 DNA strands simultaneously in an ATP-dependent manner. The chain is DNA gyrase subunit A from Lawsonia intracellularis (strain PHE/MN1-00).